A 303-amino-acid chain; its full sequence is Elongation factor Ts (303 aa).

The interval 80-83 (TDFV) is involved in Mg(2+) ion dislocation from EF-Tu.

It belongs to the EF-Ts family.

It localises to the cytoplasm. Associates with the EF-Tu.GDP complex and induces the exchange of GDP to GTP. It remains bound to the aminoacyl-tRNA.EF-Tu.GTP complex up to the GTP hydrolysis stage on the ribosome. The sequence is that of Elongation factor Ts from Clostridium perfringens (strain ATCC 13124 / DSM 756 / JCM 1290 / NCIMB 6125 / NCTC 8237 / Type A).